The primary structure comprises 195 residues: Imidazoleglycerol-phosphate dehydratase (195 aa).

This sequence belongs to the imidazoleglycerol-phosphate dehydratase family.

Its subcellular location is the cytoplasm. The catalysed reaction is D-erythro-1-(imidazol-4-yl)glycerol 3-phosphate = 3-(imidazol-4-yl)-2-oxopropyl phosphate + H2O. The protein operates within amino-acid biosynthesis; L-histidine biosynthesis; L-histidine from 5-phospho-alpha-D-ribose 1-diphosphate: step 6/9. In Hydrogenovibrio crunogenus (strain DSM 25203 / XCL-2) (Thiomicrospira crunogena), this protein is Imidazoleglycerol-phosphate dehydratase.